We begin with the raw amino-acid sequence, 141 residues long: Hemoglobin subunit alpha (141 aa).

In terms of domain architecture, Globin spans 1–141 (VLSAADKSNV…VSTVLTSKYR (141 aa)). At Ser-3 the chain carries Phosphoserine. Residues Lys-7 and Lys-11 each carry the N6-succinyllysine modification. Lys-16 is subject to N6-acetyllysine; alternate. The residue at position 16 (Lys-16) is an N6-succinyllysine; alternate. Tyr-24 carries the post-translational modification Phosphotyrosine. Ser-35 carries the post-translational modification Phosphoserine. Residue Lys-40 is modified to N6-succinyllysine. Position 49 is a phosphoserine (Ser-49). His-58 contacts O2. His-87 lines the heme b pocket. The residue at position 102 (Ser-102) is a Phosphoserine. Residue Thr-108 is modified to Phosphothreonine. Phosphoserine is present on Ser-124. Phosphothreonine occurs at positions 134 and 137. Ser-138 carries the phosphoserine modification.

This sequence belongs to the globin family. Heterotetramer of two alpha chains and two beta chains. As to expression, red blood cells.

Its function is as follows. Involved in oxygen transport from the lung to the various peripheral tissues. Functionally, hemopressin acts as an antagonist peptide of the cannabinoid receptor CNR1. Hemopressin-binding efficiently blocks cannabinoid receptor CNR1 and subsequent signaling. The protein is Hemoglobin subunit alpha (HBA) of Rangifer tarandus (Reindeer).